Here is a 367-residue protein sequence, read N- to C-terminus: Flagellar P-ring protein (367 aa).

The signal sequence occupies residues 1 to 22 (MRRMLVIRWILAIHLIATQVFA).

It belongs to the FlgI family. The basal body constitutes a major portion of the flagellar organelle and consists of four rings (L,P,S, and M) mounted on a central rod.

It localises to the periplasm. It is found in the bacterial flagellum basal body. Assembles around the rod to form the L-ring and probably protects the motor/basal body from shearing forces during rotation. This chain is Flagellar P-ring protein, found in Legionella pneumophila (strain Lens).